A 457-amino-acid chain; its full sequence is Phosphatidate cytidylyltransferase (457 aa).

6 consecutive transmembrane segments (helical) span residues Val71 to Ile91, Phe154 to Phe174, Gly188 to Ile208, Gly214 to Leu234, Gly255 to Ser275, and Phe330 to Ala350.

This sequence belongs to the CDS family. In terms of assembly, homodimer. Mg(2+) is required as a cofactor.

It is found in the endoplasmic reticulum membrane. The protein resides in the cytoplasmic vesicle. It localises to the secretory vesicle. The enzyme catalyses a 1,2-diacyl-sn-glycero-3-phosphate + CTP + H(+) = a CDP-1,2-diacyl-sn-glycerol + diphosphate. Its pathway is phospholipid metabolism; CDP-diacylglycerol biosynthesis; CDP-diacylglycerol from sn-glycerol 3-phosphate: step 3/3. In terms of biological role, supplies CDP-diacylglycerol, which may play an important role as both a precursor to phosphoinositide biosynthesis in the plasma membrane and as a negative effector of phosphatidylinositol 4-kinase activity, thereby exerting an effect on cell proliferation via a lipid-dependent signal transduction cascade. This chain is Phosphatidate cytidylyltransferase (CDS1), found in Saccharomyces cerevisiae (strain ATCC 204508 / S288c) (Baker's yeast).